We begin with the raw amino-acid sequence, 217 residues long: Transcriptional regulator NovE (217 aa).

Residues 1 to 41 are disordered; sequence MVASGRTASKGRGNGATPVRPTAGDATPVDSGQPSDTTYGG.

Its function is as follows. Transcription regulator that specifically regulates expression of genes involved in the novobiocin biosynthesis pathway. Probably acts as a positive regulator of transcription. Does not bind DNA. The chain is Transcriptional regulator NovE (novE) from Streptomyces niveus (Streptomyces spheroides).